Reading from the N-terminus, the 400-residue chain is NADH-quinone oxidoreductase subunit D (400 aa).

This sequence belongs to the complex I 49 kDa subunit family. As to quaternary structure, NDH-1 is composed of 14 different subunits. Subunits NuoB, C, D, E, F, and G constitute the peripheral sector of the complex.

It is found in the cell inner membrane. The enzyme catalyses a quinone + NADH + 5 H(+)(in) = a quinol + NAD(+) + 4 H(+)(out). Its function is as follows. NDH-1 shuttles electrons from NADH, via FMN and iron-sulfur (Fe-S) centers, to quinones in the respiratory chain. The immediate electron acceptor for the enzyme in this species is believed to be a menaquinone. Couples the redox reaction to proton translocation (for every two electrons transferred, four hydrogen ions are translocated across the cytoplasmic membrane), and thus conserves the redox energy in a proton gradient. This is NADH-quinone oxidoreductase subunit D from Chlorobium chlorochromatii (strain CaD3).